The sequence spans 149 residues: Large ribosomal subunit protein bL9 (149 aa).

It belongs to the bacterial ribosomal protein bL9 family.

Functionally, binds to the 23S rRNA. In Vibrio cholerae serotype O1 (strain ATCC 39541 / Classical Ogawa 395 / O395), this protein is Large ribosomal subunit protein bL9.